The following is a 229-amino-acid chain: Synaptogyrin-3 (229 aa).

The residue at position 1 (Met-1) is an N-acetylmethionine. The 153-residue stretch at 20-172 (FARRPQTLLR…LTVKALQRFR (153 aa)) folds into the MARVEL domain. 4 helical membrane passes run 30 to 50 (VVSWVFSIAVFGPIVNEGYVN), 70 to 90 (FGVVLGLGAFIACVAFLLLDV), 105 to 125 (VLLDLGFSGVWSFLWFVGFCF), and 148 to 168 (AAIAFSFFSILSWVALTVKAL). The span at 209-223 (QSPPFTETLDTSSKG) shows a compositional bias: polar residues. Positions 209 to 229 (QSPPFTETLDTSSKGYQVPAY) are disordered.

It belongs to the synaptogyrin family. In terms of assembly, interacts (via N-terminus) with SLC6A3 (via N-terminus). May interact with VMAT2. Specifically expressed in brain. Found in the brain across the dorsal and ventral corpus striatum as well as in the cortex.

The protein resides in the cytoplasmic vesicle. It localises to the secretory vesicle. The protein localises to the synaptic vesicle membrane. It is found in the synapse. Functionally, may play a role in regulated exocytosis. May indirectly regulate the activity of the plasma membrane dopamine transporter SLC6A3 and thereby regulate dopamine transport back from the synaptic cleft into the presynaptic terminal. The polypeptide is Synaptogyrin-3 (Mus musculus (Mouse)).